Here is a 262-residue protein sequence, read N- to C-terminus: uncharacterized protein (262 aa).

A signal peptide spans 1–22; that stretch reads MMNNSITLLLALLVGLVGFAFT.

The protein belongs to the IIV-6 117L family.

This is an uncharacterized protein from Aedes vexans (Inland floodwater mosquito).